The chain runs to 116 residues: Ino eighty subunit 4 (116 aa).

Low complexity predominate over residues 1-15 (MSQESSVLSESQEQL). Disordered stretches follow at residues 1–40 (MSQE…PVLP) and 70–116 (EERQ…GLDS). Residues 84–108 (KGSDDKATRKKEPADEDPEVKQLEK) show a composition bias toward basic and acidic residues.

Component of the chromatin-remodeling INO80 complex, at least composed of ARP4, ARP5, ARP8, RVB1, RVB2, TAF14, NHP10, IES1, IES3, IES4, IES6, ACT1, IES2, IES5 and INO80.

The protein resides in the nucleus. In Saccharomyces cerevisiae (strain ATCC 204508 / S288c) (Baker's yeast), this protein is Ino eighty subunit 4 (IES4).